The primary structure comprises 214 residues: uncharacterized protein (214 aa).

The first 15 residues, 1–15, serve as a signal peptide directing secretion; sequence MRPLILSIFALFLAG. The N-palmitoyl cysteine moiety is linked to residue C16. C16 is lipidated: S-diacylglycerol cysteine.

To E.coli YjbF.

Its subcellular location is the cell membrane. This is an uncharacterized protein from Escherichia coli (strain K12).